We begin with the raw amino-acid sequence, 600 residues long: Methionine--tRNA ligase (600 aa).

The 'HIGH' region motif lies at 11-21 (PYANGPRHIGH). Residues Cys143, Cys146, Cys156, and Cys159 each coordinate Zn(2+). The short motif at 351–355 (KFSSS) is the 'KMSKS' region element. Ser354 provides a ligand contact to ATP.

It belongs to the class-I aminoacyl-tRNA synthetase family. MetG type 1 subfamily. As to quaternary structure, monomer. It depends on Zn(2+) as a cofactor.

It is found in the cytoplasm. The enzyme catalyses tRNA(Met) + L-methionine + ATP = L-methionyl-tRNA(Met) + AMP + diphosphate. Functionally, is required not only for elongation of protein synthesis but also for the initiation of all mRNA translation through initiator tRNA(fMet) aminoacylation. The chain is Methionine--tRNA ligase from Salinispora arenicola (strain CNS-205).